The primary structure comprises 255 residues: Triosephosphate isomerase (255 aa).

9–11 (NWK) lines the substrate pocket. The active-site Electrophile is the His-95. Glu-167 (proton acceptor) is an active-site residue. Substrate-binding positions include Gly-173, Ser-212, and 233–234 (GG).

It belongs to the triosephosphate isomerase family. In terms of assembly, homodimer.

The protein resides in the cytoplasm. It carries out the reaction D-glyceraldehyde 3-phosphate = dihydroxyacetone phosphate. Its pathway is carbohydrate biosynthesis; gluconeogenesis. It functions in the pathway carbohydrate degradation; glycolysis; D-glyceraldehyde 3-phosphate from glycerone phosphate: step 1/1. In terms of biological role, involved in the gluconeogenesis. Catalyzes stereospecifically the conversion of dihydroxyacetone phosphate (DHAP) to D-glyceraldehyde-3-phosphate (G3P). This Enterobacter cloacae protein is Triosephosphate isomerase.